A 260-amino-acid polypeptide reads, in one-letter code: MKVRTLTAIIALIVFLPILLKGGLVLMIFANILALIALKELLNMNMIKFVSVPGLISAVGLIIIMLPQHAGPWVQVIQLKSLIAMSFIVLSYTVLSKNRFSFMDAAFCLMSVAYVGIGFMFFYETRSEGLHYILYAFLIVWLTDTGAYLFGKMMGKHKLWPVISPNKTIEGFIGGLFCSLIVPLAMLYFVDFNMNVWILLGVTLILSLFGQLGDLVESGFKRHFGVKDSGRILPGHGGILDRFDSFMFVLPLLNILLIQS.

7 helical membrane passes run 9-29, 46-66, 70-90, 102-122, 130-150, 172-192, and 196-216; these read IIAL…LMIF, MIKF…IIML, AGPW…FIVL, FMDA…FMFF, LHYI…AYLF, FIGG…FVDF, and VWIL…GDLV.

Belongs to the CDS family.

The protein resides in the cell membrane. The catalysed reaction is a 1,2-diacyl-sn-glycero-3-phosphate + CTP + H(+) = a CDP-1,2-diacyl-sn-glycerol + diphosphate. It functions in the pathway phospholipid metabolism; CDP-diacylglycerol biosynthesis; CDP-diacylglycerol from sn-glycerol 3-phosphate: step 3/3. The sequence is that of Phosphatidate cytidylyltransferase (cdsA) from Staphylococcus aureus (strain COL).